A 465-amino-acid chain; its full sequence is Methylenetetrahydrofolate--tRNA-(uracil-5-)-methyltransferase TrmFO (465 aa).

11–16 (GGGLAG) is an FAD binding site.

It belongs to the MnmG family. TrmFO subfamily. It depends on FAD as a cofactor.

It localises to the cytoplasm. It catalyses the reaction uridine(54) in tRNA + (6R)-5,10-methylene-5,6,7,8-tetrahydrofolate + NADH + H(+) = 5-methyluridine(54) in tRNA + (6S)-5,6,7,8-tetrahydrofolate + NAD(+). The catalysed reaction is uridine(54) in tRNA + (6R)-5,10-methylene-5,6,7,8-tetrahydrofolate + NADPH + H(+) = 5-methyluridine(54) in tRNA + (6S)-5,6,7,8-tetrahydrofolate + NADP(+). Its function is as follows. Catalyzes the folate-dependent formation of 5-methyl-uridine at position 54 (M-5-U54) in all tRNAs. The protein is Methylenetetrahydrofolate--tRNA-(uracil-5-)-methyltransferase TrmFO of Acaryochloris marina (strain MBIC 11017).